The following is a 118-amino-acid chain: Holo-[acyl-carrier-protein] synthase (118 aa).

Mg(2+) is bound by residues D8 and E58.

It belongs to the P-Pant transferase superfamily. AcpS family. Mg(2+) is required as a cofactor.

It is found in the cytoplasm. It catalyses the reaction apo-[ACP] + CoA = holo-[ACP] + adenosine 3',5'-bisphosphate + H(+). Its function is as follows. Transfers the 4'-phosphopantetheine moiety from coenzyme A to a Ser of acyl-carrier-protein. The polypeptide is Holo-[acyl-carrier-protein] synthase (Listeria monocytogenes serotype 4a (strain HCC23)).